We begin with the raw amino-acid sequence, 419 residues long: Creatine kinase S-type, mitochondrial (419 aa).

Residues M1 to A39 constitute a mitochondrion transit peptide. The tract at residues E40–M64 is cardiolipin-binding. Positions R46–N132 constitute a Phosphagen kinase N-terminal domain. Positions Y159–L401 constitute a Phosphagen kinase C-terminal domain. ATP-binding positions include S162–R166 and H225. Residue Y255 is modified to Phosphotyrosine. ATP-binding positions include R270, R326, R354–V359, and D369. T356 is modified (phosphothreonine).

Belongs to the ATP:guanido phosphotransferase family. As to quaternary structure, exists as an octamer composed of four CKMT2 homodimers. As to expression, sarcomere-specific. Found only in heart and skeletal muscles.

It is found in the mitochondrion inner membrane. It carries out the reaction creatine + ATP = N-phosphocreatine + ADP + H(+). Its function is as follows. Reversibly catalyzes the transfer of phosphate between ATP and various phosphogens (e.g. creatine phosphate). Creatine kinase isoenzymes play a central role in energy transduction in tissues with large, fluctuating energy demands, such as skeletal muscle, heart, brain and spermatozoa. This Homo sapiens (Human) protein is Creatine kinase S-type, mitochondrial (CKMT2).